Here is a 343-residue protein sequence, read N- to C-terminus: Flavonoid 3'-O-methyltransferase FOMT (343 aa).

Positions 184, 207, 227, 228, 240, and 241 each coordinate S-adenosyl-L-homocysteine. His-245 functions as the Proton acceptor in the catalytic mechanism. Catalysis depends on residues Glu-273 and Glu-305.

The protein belongs to the class I-like SAM-binding methyltransferase superfamily. Cation-independent O-methyltransferase family. Homodimer.

The catalysed reaction is 3',5-dihydroxy-3,4',7-trimethoxyflavone + S-adenosyl-L-methionine = 5-hydroxy-3,7,3',4'-tetramethoxyflavone + S-adenosyl-L-homocysteine + H(+). The protein operates within flavonoid metabolism. With respect to regulation, inhibited by nickel (NiCl(2) and NiSO(4)) and para-chloromercuribenzoate. Functionally, catalyzes the 3'- or 5'-O-methylation of partially methylated flavonols, but does not accept quercetin or caffeate as substrates for methylation. The polypeptide is Flavonoid 3'-O-methyltransferase FOMT (Chrysosplenium americanum (American golden saxifrage)).